The primary structure comprises 233 residues: uncharacterized protein (233 aa).

This is an uncharacterized protein from Bacillus subtilis (strain 168).